Here is a 703-residue protein sequence, read N- to C-terminus: Fatty acid oxidation complex subunit alpha (703 aa).

An enoyl-CoA hydratase region spans residues 1–190 (MSEQKAFSLN…KLGVVDACVP (190 aa)). Positions 308 to 703 (AAVKKVGVLG…TRAGEGRTFY (396 aa)) are 3-hydroxyacyl-CoA dehydrogenase.

In the N-terminal section; belongs to the enoyl-CoA hydratase/isomerase family. It in the central section; belongs to the 3-hydroxyacyl-CoA dehydrogenase family. As to quaternary structure, heterotetramer of two alpha chains (FadJ) and two beta chains (FadI).

The protein localises to the cytoplasm. The catalysed reaction is a (3S)-3-hydroxyacyl-CoA = a (2E)-enoyl-CoA + H2O. The enzyme catalyses a 4-saturated-(3S)-3-hydroxyacyl-CoA = a (3E)-enoyl-CoA + H2O. It carries out the reaction a (3S)-3-hydroxyacyl-CoA + NAD(+) = a 3-oxoacyl-CoA + NADH + H(+). It catalyses the reaction (3S)-3-hydroxybutanoyl-CoA = (3R)-3-hydroxybutanoyl-CoA. The protein operates within lipid metabolism; fatty acid beta-oxidation. In terms of biological role, catalyzes the formation of a hydroxyacyl-CoA by addition of water on enoyl-CoA. Also exhibits 3-hydroxyacyl-CoA epimerase and 3-hydroxyacyl-CoA dehydrogenase activities. The polypeptide is Fatty acid oxidation complex subunit alpha (Vibrio parahaemolyticus serotype O3:K6 (strain RIMD 2210633)).